The primary structure comprises 162 residues: Cytochrome c-type biogenesis protein CcmE (162 aa).

At 1–8 the chain is on the cytoplasmic side; the sequence is MNPRRKKR. A helical; Signal-anchor for type II membrane protein membrane pass occupies residues 9-29; it reads LTLAVALIGGVAAITSLLLYA. The Periplasmic segment spans residues 30 to 162; that stretch reads LNSNLNLFYT…YSQQKAPDTK (133 aa). Positions 131 and 135 each coordinate heme. The segment at 142-162 is disordered; sequence EAMGQKHEKLDYSQQKAPDTK. Polar residues predominate over residues 153-162; that stretch reads YSQQKAPDTK.

It belongs to the CcmE/CycJ family.

It is found in the cell inner membrane. Its function is as follows. Heme chaperone required for the biogenesis of c-type cytochromes. Transiently binds heme delivered by CcmC and transfers the heme to apo-cytochromes in a process facilitated by CcmF and CcmH. The protein is Cytochrome c-type biogenesis protein CcmE of Shewanella baltica (strain OS223).